A 123-amino-acid polypeptide reads, in one-letter code: MESSLYKKTSGKARRALRVRKALKGCSLKPRLSVVKTNKHVYVQLIDDVEGKTLASISTLAKVAKTSGLTRKNQDNAKALGIKIAELGKGLQVDRVVFDRGAHKYHGVVAMVADGAREGGLQF.

This sequence belongs to the universal ribosomal protein uL18 family. In terms of assembly, part of the 50S ribosomal subunit; part of the 5S rRNA/L5/L18/L25 subcomplex. Contacts the 5S and 23S rRNAs.

In terms of biological role, this is one of the proteins that bind and probably mediate the attachment of the 5S RNA into the large ribosomal subunit, where it forms part of the central protuberance. The chain is Large ribosomal subunit protein uL18 from Chlamydia trachomatis serovar A (strain ATCC VR-571B / DSM 19440 / HAR-13).